A 263-amino-acid chain; its full sequence is Putative ankyrin repeat domain-containing protein 20A12 pseudogene (263 aa).

Coiled coils occupy residues 65 to 121 (KKDL…MLES) and 171 to 263 (NQVF…IQLH).

In Homo sapiens (Human), this protein is Putative ankyrin repeat domain-containing protein 20A12 pseudogene.